We begin with the raw amino-acid sequence, 209 residues long: Large ribosomal subunit protein uL4 (209 aa).

The interval 45 to 80 (RQGTHKAKERSELSGSTRKLIRQKGSGGARRGDINS) is disordered.

This sequence belongs to the universal ribosomal protein uL4 family. In terms of assembly, part of the 50S ribosomal subunit.

Functionally, one of the primary rRNA binding proteins, this protein initially binds near the 5'-end of the 23S rRNA. It is important during the early stages of 50S assembly. It makes multiple contacts with different domains of the 23S rRNA in the assembled 50S subunit and ribosome. Its function is as follows. Forms part of the polypeptide exit tunnel. This Porphyromonas gingivalis (strain ATCC BAA-308 / W83) protein is Large ribosomal subunit protein uL4.